Consider the following 96-residue polypeptide: Small ribosomal subunit protein bS6 (96 aa).

Belongs to the bacterial ribosomal protein bS6 family.

Binds together with bS18 to 16S ribosomal RNA. This chain is Small ribosomal subunit protein bS6, found in Streptococcus sanguinis (strain SK36).